The sequence spans 219 residues: Putative protease Do-like 6, chloroplastic (219 aa).

Residues 1 to 45 (MLFRSVHHIVARFSNSTSTPIHRFFYSPSLLRRRSSFNASLISRC) constitute a chloroplast transit peptide. The segment at 61-216 (KIFSFSREPN…YSGQINKKIY (156 aa)) is serine protease. Active-site charge relay system residues include histidine 99, aspartate 130, and serine 208.

This sequence belongs to the peptidase S1B family.

Its subcellular location is the plastid. The protein resides in the chloroplast. Putative serine protease. This chain is Putative protease Do-like 6, chloroplastic (DEGP6), found in Arabidopsis thaliana (Mouse-ear cress).